A 255-amino-acid chain; its full sequence is Triosephosphate isomerase (255 aa).

9–11 (NWK) provides a ligand contact to substrate. His95 acts as the Electrophile in catalysis. The active-site Proton acceptor is Glu167. Substrate contacts are provided by residues Gly173, Ser212, and 233–234 (GG).

It belongs to the triosephosphate isomerase family. In terms of assembly, homodimer.

It localises to the cytoplasm. It carries out the reaction D-glyceraldehyde 3-phosphate = dihydroxyacetone phosphate. Its pathway is carbohydrate biosynthesis; gluconeogenesis. It participates in carbohydrate degradation; glycolysis; D-glyceraldehyde 3-phosphate from glycerone phosphate: step 1/1. Functionally, involved in the gluconeogenesis. Catalyzes stereospecifically the conversion of dihydroxyacetone phosphate (DHAP) to D-glyceraldehyde-3-phosphate (G3P). The sequence is that of Triosephosphate isomerase from Salmonella dublin (strain CT_02021853).